Consider the following 349-residue polypeptide: Cobalt-precorrin-5B C(1)-methyltransferase (349 aa).

The protein belongs to the CbiD family.

The catalysed reaction is Co-precorrin-5B + S-adenosyl-L-methionine = Co-precorrin-6A + S-adenosyl-L-homocysteine. Its pathway is cofactor biosynthesis; adenosylcobalamin biosynthesis; cob(II)yrinate a,c-diamide from sirohydrochlorin (anaerobic route): step 6/10. In terms of biological role, catalyzes the methylation of C-1 in cobalt-precorrin-5B to form cobalt-precorrin-6A. This is Cobalt-precorrin-5B C(1)-methyltransferase from Saccharolobus islandicus (strain Y.N.15.51 / Yellowstone #2) (Sulfolobus islandicus).